Reading from the N-terminus, the 163-residue chain is Lectin-like protein EP153R (163 aa).

Topologically, residues 1–26 are cytoplasmic; it reads MFSNKKYIGLINKKEGLKKKIDDYSI. Residues 27–47 traverse the membrane as a helical segment; it reads LIIGILIGTNILSLIINIIGE. Topologically, residues 48 to 163 are extracellular; it reads INKPICYQNN…YTDLLFICSK (116 aa). Residues C63 and C74 are joined by a disulfide bond. The tract at residues 63–162 is lectin-like; the sequence is CPKDWVGYNN…HYTDLLFICS (100 aa). Residues N84, N96, N97, N103, N109, N115, N129, and N135 are each glycosylated (N-linked (GlcNAc...) asparagine; by host). A disulfide bridge links C92 with C161.

Belongs to the asfivirus lectin-like protein family. Homodimer.

It is found in the host endoplasmic reticulum membrane. Functionally, down-regulates MHC-I expression by impairing the appropriate configuration or presentation into the plasma membrane of the latter. Participates in viral hemadsorption, which may help viral spread. Reduces the transactivating activity of host TP53, thus inhibiting apoptosis. Non-essential for virus growth in swine macrophage cell cultures. This African swine fever virus (isolate Warthog/Namibia/Wart80/1980) (ASFV) protein is Lectin-like protein EP153R.